Here is a 762-residue protein sequence, read N- to C-terminus: Endonuclease MutS2 (762 aa).

An ATP-binding site is contributed by 333 to 340; that stretch reads GVNAGGKT. In terms of domain architecture, Smr spans 688-762; sequence LDLRGQRSEE…GGSGVKIVKL (75 aa).

It belongs to the DNA mismatch repair MutS family. MutS2 subfamily. In terms of assembly, homodimer. Binds to stalled ribosomes, contacting rRNA.

Functionally, endonuclease that is involved in the suppression of homologous recombination and thus may have a key role in the control of bacterial genetic diversity. Its function is as follows. Acts as a ribosome collision sensor, splitting the ribosome into its 2 subunits. Detects stalled/collided 70S ribosomes which it binds and splits by an ATP-hydrolysis driven conformational change. Acts upstream of the ribosome quality control system (RQC), a ribosome-associated complex that mediates the extraction of incompletely synthesized nascent chains from stalled ribosomes and their subsequent degradation. Probably generates substrates for RQC. The polypeptide is Endonuclease MutS2 (Helicobacter pylori (strain J99 / ATCC 700824) (Campylobacter pylori J99)).